We begin with the raw amino-acid sequence, 310 residues long: Fe-S cluster assembly protein dre2 (310 aa).

The segment at Met1–Val130 is N-terminal SAM-like domain. Positions Pro131–Ala203 are linker. Positions 212, 223, 226, and 228 each coordinate [2Fe-2S] cluster. A fe-S binding site A region spans residues Cys212 to Cys228. 4 residues coordinate [4Fe-4S] cluster: Cys273, Cys276, Cys284, and Cys287. 2 short sequence motifs (cx2C motif) span residues Cys273–Cys276 and Cys284–Cys287. Residues Cys273–Cys287 form a fe-S binding site B region.

This sequence belongs to the anamorsin family. Monomer. Interacts with tah18. Interacts with mia40. It depends on [2Fe-2S] cluster as a cofactor. The cofactor is [4Fe-4S] cluster.

It is found in the cytoplasm. The protein localises to the mitochondrion intermembrane space. Functionally, component of the cytosolic iron-sulfur (Fe-S) protein assembly (CIA) machinery required for the maturation of extramitochondrial Fe-S proteins. Part of an electron transfer chain functioning in an early step of cytosolic Fe-S biogenesis, facilitating the de novo assembly of a [4Fe-4S] cluster on the scaffold complex cfd1-nbp35. Electrons are transferred to dre2 from NADPH via the FAD- and FMN-containing protein tah18. Tah18-dre2 are also required for the assembly of the diferric tyrosyl radical cofactor of ribonucleotide reductase (RNR), probably by providing electrons for reduction during radical cofactor maturation in the catalytic small subunit rnr2. This Aspergillus clavatus (strain ATCC 1007 / CBS 513.65 / DSM 816 / NCTC 3887 / NRRL 1 / QM 1276 / 107) protein is Fe-S cluster assembly protein dre2.